The sequence spans 315 residues: Calcium homeostasis modulator protein 6 (315 aa).

Over 1–21 (MEKFKAVLDLQIKHRSALGYG) the chain is Cytoplasmic. A helical membrane pass occupies residues 22–37 (LVTLLTAGGEKIFSTV). Residues 38–46 (VFQCPCTAT) are Extracellular-facing. 3 disulfide bridges follow: Cys-41–Cys-127, Cys-43–Cys-156, and Cys-140–Cys-147. A helical transmembrane segment spans residues 47-68 (LNLTYGLVFLLVPALALFLLGY). The Cytoplasmic segment spans residues 69–103 (ALSARTWRLLTGCCSRSASTRSSSGLRSTLVCAQV). Residues 104 to 128 (SAVAALAPLTWVAVALLGGSFYQCA) traverse the membrane as a helical segment. At 129–169 (VSGSTRLASYLCKDRNHSCIAKLPQVPCNKQEAEMQEILSQ) the chain is on the extracellular side. A helical transmembrane segment spans residues 170–192 (LKAQSQVLGWVLIAAVIFLLLVF). Over 193-315 (KCVSRCFSPV…DAAMANTHGV (123 aa)) the chain is Cytoplasmic.

It belongs to the CALHM family. Oligomerizes to form decameric and undecameric channels.

It is found in the cell membrane. The catalysed reaction is ATP(in) = ATP(out). Functionally, pore-forming subunit of an ATP-permeable channel. In response to pathogen-derived and proinflammatory stimuli, relocates from intracellular compartments to NK-dendritic cell and NK-macrophage immune synapses where it mediates ATP efflux and NK cell activation involved in antimicrobial and antitumor responses. May assemble to form gap junction channel-like structures with gating and ion conductance likely regulated by membrane lipids and voltage rather than by extracellular calcium levels. The protein is Calcium homeostasis modulator protein 6 of Rattus norvegicus (Rat).